A 532-amino-acid polypeptide reads, in one-letter code: Metal-staphylopine-binding protein CntA (532 aa).

Residues 1 to 20 (MRKLTKMSAMLLASGLILTG) form the signal peptide. The N-palmitoyl cysteine moiety is linked to residue Cys-21. Cys-21 carries S-diacylglycerol cysteine lipidation. Staphylopine is bound by residues Arg-165, Arg-418, and Asn-448.

This sequence belongs to the bacterial solute-binding protein 5 family. In terms of assembly, the complex is composed of two ATP-binding proteins (CntD and CntF), two transmembrane proteins (CntB and CntC) and a solute-binding protein (CntA).

Its subcellular location is the cell membrane. Its activity is regulated as follows. Nickel/cobalt import is reduced in the presence of zinc. In terms of biological role, part of the ABC transporter complex CntABCDF (Opp1) involved in the uptake of metal in complex with the metallophore staphylopine (StP). Involved in the import of divalent metals ions such as nickel, cobalt and zinc. Binds the metal via the metallophore StP, and transfers the StP-metal complex to the membrane-bound permease. Binds one molecule of StP/metal. Binds StP/Co(2+) and StP/Ni(2+) tighter than StP/Zn(2+). Plays a major role in nickel/cobalt import in zinc-depleted conditions. Contributes to virulence. Required for full urease activity in vitro. This chain is Metal-staphylopine-binding protein CntA, found in Staphylococcus aureus (strain NCTC 8325 / PS 47).